Reading from the N-terminus, the 109-residue chain is Putative RNase MJ1380 (109 aa).

Active-site residues include arginine 76 and histidine 81. The short motif at 76 to 83 (RNILIHKY) is the RX(4)HXY motif element. Position 83 is an O-di-AMP-tyrosine (tyrosine 83).

This sequence belongs to the HepT RNase toxin family. As to quaternary structure, homodimer, probably forms a complex with cognate antitoxin MJ1379. Modified by cognate antitoxin MJ1379; probably at least 2 successive AMPylation events occur on Tyr-83.

Its function is as follows. Probable toxic component of a putative type VII toxin-antitoxin (TA) system, probably an RNase. Probably neutralized by cognate antitoxin MJ1379. Neutralization may be due to AMPylation by antitoxin MJ1379. The sequence is that of Putative RNase MJ1380 from Methanocaldococcus jannaschii (strain ATCC 43067 / DSM 2661 / JAL-1 / JCM 10045 / NBRC 100440) (Methanococcus jannaschii).